A 195-amino-acid polypeptide reads, in one-letter code: MRVAEVVRNTSETQIRVKLNLDGTGQQKLATGVPFLDHMLDQIARHGLVDLEVEAHGDTHIDDHHTVEDVGITLGQAVAKAIGDRKGIRRYGHSYVPLDEALSRVVIDFSGRPGLEFHVPFTRARIGTFDVDLSIEFFRGFVNHAGVTLHIDNLRGINAHHQLETVFKAFGRALRAAVELDERAAGQIPSTKGSL.

The protein belongs to the imidazoleglycerol-phosphate dehydratase family.

It localises to the cytoplasm. The catalysed reaction is D-erythro-1-(imidazol-4-yl)glycerol 3-phosphate = 3-(imidazol-4-yl)-2-oxopropyl phosphate + H2O. It participates in amino-acid biosynthesis; L-histidine biosynthesis; L-histidine from 5-phospho-alpha-D-ribose 1-diphosphate: step 6/9. The sequence is that of Imidazoleglycerol-phosphate dehydratase from Burkholderia lata (strain ATCC 17760 / DSM 23089 / LMG 22485 / NCIMB 9086 / R18194 / 383).